Here is a 373-residue protein sequence, read N- to C-terminus: Probable tRNA sulfurtransferase (373 aa).

Positions 54–158 constitute a THUMP domain; the sequence is NKNIEELSKV…NDVAYFYHKI (105 aa). ATP contacts are provided by residues 176–177, 201–202, Lys256, Gly278, and Gln287; these read LF and NF.

This sequence belongs to the ThiI family.

It localises to the cytoplasm. The catalysed reaction is [ThiI sulfur-carrier protein]-S-sulfanyl-L-cysteine + a uridine in tRNA + 2 reduced [2Fe-2S]-[ferredoxin] + ATP + H(+) = [ThiI sulfur-carrier protein]-L-cysteine + a 4-thiouridine in tRNA + 2 oxidized [2Fe-2S]-[ferredoxin] + AMP + diphosphate. It catalyses the reaction [ThiS sulfur-carrier protein]-C-terminal Gly-Gly-AMP + S-sulfanyl-L-cysteinyl-[cysteine desulfurase] + AH2 = [ThiS sulfur-carrier protein]-C-terminal-Gly-aminoethanethioate + L-cysteinyl-[cysteine desulfurase] + A + AMP + 2 H(+). It participates in cofactor biosynthesis; thiamine diphosphate biosynthesis. Its function is as follows. Catalyzes the ATP-dependent transfer of a sulfur to tRNA to produce 4-thiouridine in position 8 of tRNAs, which functions as a near-UV photosensor. Also catalyzes the transfer of sulfur to the sulfur carrier protein ThiS, forming ThiS-thiocarboxylate. This is a step in the synthesis of thiazole, in the thiamine biosynthesis pathway. The sulfur is donated as persulfide by IscS. The polypeptide is Probable tRNA sulfurtransferase (Saccharolobus islandicus (strain M.16.27) (Sulfolobus islandicus)).